Here is a 159-residue protein sequence, read N- to C-terminus: Protein UXT homolog (159 aa).

The protein belongs to the UXT family.

The chain is Protein UXT homolog from Nematostella vectensis (Starlet sea anemone).